A 568-amino-acid polypeptide reads, in one-letter code: NADH-ubiquinone oxidoreductase chain 5 (568 aa).

The next 14 membrane-spanning stretches (helical) occupy residues 7-27, 44-64, 90-110, 144-164, 165-185, 210-232, 240-260, 274-294, 297-317, 334-354, 378-398, 426-446, 452-472, and 547-567; these read LGLL…SSFG, FSFS…VLVI, WLFV…MLLI, IGDV…GWLI, YSYH…FAGM, LVHS…YIIS, VLMI…VFAF, LSLM…FHLV, AVFK…NQSI, MGAM…SGFF, LLGL…VMLG, AIIL…VVVL, LSVF…ISKL, and FTYQ…LIIF.

This sequence belongs to the complex I subunit 5 family.

The protein resides in the mitochondrion inner membrane. The catalysed reaction is a ubiquinone + NADH + 5 H(+)(in) = a ubiquinol + NAD(+) + 4 H(+)(out). Core subunit of the mitochondrial membrane respiratory chain NADH dehydrogenase (Complex I) that is believed to belong to the minimal assembly required for catalysis. Complex I functions in the transfer of electrons from NADH to the respiratory chain. The immediate electron acceptor for the enzyme is believed to be ubiquinone. This chain is NADH-ubiquinone oxidoreductase chain 5 (ND5), found in Mytilus edulis (Blue mussel).